We begin with the raw amino-acid sequence, 213 residues long: Large ribosomal subunit protein uL1 (213 aa).

This sequence belongs to the universal ribosomal protein uL1 family. In terms of assembly, part of the 50S ribosomal subunit.

Its function is as follows. Probably involved in E site tRNA release. Binds directly to 23S rRNA. Functionally, protein L1 is also a translational repressor protein, it controls the translation of its operon by binding to its mRNA. This Methanothermococcus thermolithotrophicus (Methanococcus thermolithotrophicus) protein is Large ribosomal subunit protein uL1.